A 122-amino-acid polypeptide reads, in one-letter code: Beta-2-microglobulin (122 aa).

The first 23 residues, 1–23 (MFLRSTFVAALVACLAYIHLGDA), serve as a signal peptide directing secretion. Residues 28-117 (PKVQIYSRNV…STLREATRFT (90 aa)) form the Ig-like C1-type domain. Cysteine 48 and cysteine 103 are disulfide-bonded.

This sequence belongs to the beta-2-microglobulin family. Heterodimer of an alpha chain and a beta chain. Beta-2-microglobulin is the beta-chain of major histocompatibility complex class I molecules.

The protein localises to the secreted. Component of the class I major histocompatibility complex (MHC). Involved in the presentation of peptide antigens to the immune system. The protein is Beta-2-microglobulin (b2m) of Acipenser baerii (Siberian sturgeon).